Here is a 50-residue protein sequence, read N- to C-terminus: Protein hunchback (50 aa).

3 consecutive C2H2-type zinc fingers follow at residues 1–5, 11–33, and 39–50; these read HLRNH, FKCG…MKSH, and YRCANCCYATKY.

The protein belongs to the hunchback C2H2-type zinc-finger protein family.

The protein localises to the nucleus. Functionally, gap class segmentation protein that controls development of head structures. The protein is Protein hunchback (hb) of Pholcus phalangioides (Longbodied cellar spider).